A 106-amino-acid polypeptide reads, in one-letter code: Starvation responsive small protein A (106 aa).

The helical transmembrane segment at 15–32 (ILLVNAGLISAYGVRIIF) threads the bilayer.

It is found in the cell membrane. Functionally, involved in starvation response and aggregation stage of the life cycle. May be involved in fruiting body morphogenesis and spore formation. In Dictyostelium discoideum (Social amoeba), this protein is Starvation responsive small protein A.